Reading from the N-terminus, the 455-residue chain is Transcription factor mokH (455 aa).

Residues 1 to 22 form a disordered region; sequence MALSPVQDPPSHTDKTMPRRAF. A DNA-binding region (zn(2)-C6 fungal-type) is located at residues 26-58; sequence CDRCHAQKIKCIGSEGAVARASCQRCQQAGLRC. Disordered stretches follow at residues 68–113 and 296–317; these read KLPK…DSSG and LTPL…RSSV. Residues 75-88 are compositionally biased toward polar residues; it reads AESSPASSTAGLHT. Low complexity predominate over residues 89-113; it reads SSSDSSPPVPSDGLPLDLPGPDSSG.

It is found in the nucleus. In terms of biological role, transcription factor that regulates the gene cluster that mediates the biosynthesis of monakolin K, also known as lovastatin, and which acts as a potent competitive inhibitor of HMG-CoA reductase. Monakolin K biosynthesis is performed in two stages. The first stage is catalyzed by the nonaketide synthase mokA, which belongs to type I polyketide synthases and catalyzes the iterative nine-step formation of the polyketide. This PKS stage is completed by the action of dehydrogenase mokE, which catalyzes the NADPH-dependent reduction of the unsaturated tetra-, penta- and heptaketide intermediates that arise during the mokA-mediated biosynthesis of the nonaketide chain and leads to dihydromonacolin L. Covalently bound dihydromonacolin L is released from mokA by the mokD esterase. Conversion of dihydromonacolin L into monacolin L and then monacolin J is subsequently performed with the participation of molecular oxygen and P450 monoogygenase mokC. Finally, mokF performs the conversion of monacoline J to monacoline K through the addition of the side-chain diketide moiety (2R)-2-methylbutanoate produced by the diketide synthase mokB. HMG-CoA reductase mokG may act as a down-regulator of monacolin K production. The sequence is that of Transcription factor mokH from Monascus pilosus (Red mold).